The primary structure comprises 479 residues: POU domain, class 2, transcription factor 2 (479 aa).

Disordered regions lie at residues 1 to 86, 166 to 200, 275 to 298, 357 to 393, and 409 to 479; these read MVHS…AQPH, TQAVTRPTLPDPHLSHPQPPKCLEPPSHPEEPSDL, SSLPSPNQLSSPSLGFDGLPGRRR, PCSAAPMLPSPGKPASYSPHMVTPQGGAGTLPLSQAS, and TLHP…PYQP. Over residues 12-37 the composition is skewed to basic and acidic residues; the sequence is RMSKPLEAEKQGLDSPSEHTDTERNG. The segment covering 38–60 has biased composition (polar residues); that stretch reads PDTNHQNPQNKTSPFSVSPTGPS. The segment covering 76–85 has biased composition (pro residues); the sequence is APLPPQPAQP. The POU-specific domain occupies 195 to 269; sequence EEPSDLEELE…LLEKWLNDAE (75 aa). Low complexity predominate over residues 275-288; the sequence is SSLPSPNQLSSPSL. Positions 297–356 form a DNA-binding region, homeobox; that stretch reads RRKKRTSIETNVRFALEKSFLANQKPTSEEILLIAEQLHMEKEVIRVWFCNRRQKEKRIN. Residues 389–410 form a leucine-zipper region; it reads LSQASSSLSTTVTTLSSAVGTL. Residues 416–425 show a composition bias toward gly residues; that stretch reads AGGGGGGGGA.

This sequence belongs to the POU transcription factor family. Class-2 subfamily. As to quaternary structure, interacts with NR3C1, AR and PGR. Interacts with POU2AF1; the interaction increases POU2F2 transactivation activity. As to expression, isoform 3 is B-cell specific. Isoform 5 is expressed in B-cells and the immunoglobulin-expressing T-cell line MOLT-4, but not in the T-cell line BW5147.

Its subcellular location is the cytoplasm. It is found in the nucleus. Its activity is regulated as follows. Transactivation activity is enhanced by transcriptional coactivator POU2AF1. Its function is as follows. Transcription factor that specifically binds to the octamer motif (5'-ATTTGCAT-3'). Regulates IL6 expression in B cells with POU2AF1. Regulates transcription in a number of tissues in addition to activating immunoglobulin gene expression. Modulates transcription transactivation by NR3C1, AR and PGR. In terms of biological role, activates the U2 small nuclear RNA (snRNA) promoter. The sequence is that of POU domain, class 2, transcription factor 2 from Homo sapiens (Human).